Consider the following 556-residue polypeptide: 2-succinyl-5-enolpyruvyl-6-hydroxy-3-cyclohexene-1-carboxylate synthase (556 aa).

Belongs to the TPP enzyme family. MenD subfamily. As to quaternary structure, homodimer. It depends on Mg(2+) as a cofactor. The cofactor is Mn(2+). Thiamine diphosphate is required as a cofactor.

It carries out the reaction isochorismate + 2-oxoglutarate + H(+) = 5-enolpyruvoyl-6-hydroxy-2-succinyl-cyclohex-3-ene-1-carboxylate + CO2. The protein operates within quinol/quinone metabolism; 1,4-dihydroxy-2-naphthoate biosynthesis; 1,4-dihydroxy-2-naphthoate from chorismate: step 2/7. It functions in the pathway quinol/quinone metabolism; menaquinone biosynthesis. Its function is as follows. Catalyzes the thiamine diphosphate-dependent decarboxylation of 2-oxoglutarate and the subsequent addition of the resulting succinic semialdehyde-thiamine pyrophosphate anion to isochorismate to yield 2-succinyl-5-enolpyruvyl-6-hydroxy-3-cyclohexene-1-carboxylate (SEPHCHC). The chain is 2-succinyl-5-enolpyruvyl-6-hydroxy-3-cyclohexene-1-carboxylate synthase from Salmonella choleraesuis (strain SC-B67).